A 1377-amino-acid chain; its full sequence is DNA-directed RNA polymerase subunit beta' (1377 aa).

Zn(2+) is bound by residues cysteine 60, cysteine 62, cysteine 75, and cysteine 78. The Mg(2+) site is built by aspartate 449, aspartate 451, and aspartate 453. Zn(2+)-binding residues include cysteine 777, cysteine 851, cysteine 858, and cysteine 861.

It belongs to the RNA polymerase beta' chain family. The RNAP catalytic core consists of 2 alpha, 1 beta, 1 beta' and 1 omega subunit. When a sigma factor is associated with the core the holoenzyme is formed, which can initiate transcription. It depends on Mg(2+) as a cofactor. Zn(2+) serves as cofactor.

The catalysed reaction is RNA(n) + a ribonucleoside 5'-triphosphate = RNA(n+1) + diphosphate. DNA-dependent RNA polymerase catalyzes the transcription of DNA into RNA using the four ribonucleoside triphosphates as substrates. In Borrelia hermsii (strain HS1 / DAH), this protein is DNA-directed RNA polymerase subunit beta'.